The primary structure comprises 722 residues: Bifunctional UDP-N-acetylglucosamine 2-epimerase/N-acetylmannosamine kinase (722 aa).

Positions 19, 23, 113, 220, and 253 each coordinate UDP. 4 residues coordinate CMP-N-acetyl-beta-neuraminate: K259, E271, K280, and H281. UDP contacts are provided by V282, S301, S302, E307, and R321. An N-acetylmannosamine kinase region spans residues 406 to 722 (TLSALAVDLG…VLDYTTRRIH (317 aa)). A Mg(2+)-binding site is contributed by D413. Residue G416 participates in an N-acyl-D-mannosamine 6-phosphate binding. T417, N418, and R420 together coordinate ADP. Positions 476, 477, 489, 516, 517, and 545 each coordinate an N-acyl-D-mannosamine 6-phosphate. An N-acyl-D-mannosamine-binding residues include G476, R477, T489, N516, and D517. Residue D517 is part of the active site. Residues E566 and H569 each coordinate an N-acyl-D-mannosamine. H569 provides a ligand contact to an N-acyl-D-mannosamine 6-phosphate. Zn(2+)-binding residues include H569, C579, C581, and C586. E588 contacts an N-acyl-D-mannosamine 6-phosphate. E588 provides a ligand contact to an N-acyl-D-mannosamine.

The protein in the N-terminal section; belongs to the UDP-N-acetylglucosamine 2-epimerase family. This sequence in the C-terminal section; belongs to the ROK (NagC/XylR) family. As to quaternary structure, homodimer. Homotetramer. Homohexamer. The hexameric form exhibits both enzyme activities, whereas the dimeric form only catalyzes the phosphorylation of N-acyl-D-mannosamine. Post-translationally, phosphorylated. Phosphorylation by PKC activates the UDP-N-acetylglucosamine 2-epimerase activity.

The protein localises to the cytoplasm. It localises to the cytosol. The catalysed reaction is UDP-N-acetyl-alpha-D-glucosamine + H2O = aldehydo-N-acetyl-D-mannosamine + UDP + H(+). It catalyses the reaction an N-acyl-D-mannosamine + ATP = an N-acyl-D-mannosamine 6-phosphate + ADP + H(+). Its pathway is amino-sugar metabolism; N-acetylneuraminate biosynthesis. With respect to regulation, the UDP-N-acetylglucosamine 2-epimerase activity, in contrast to the N-acetylmannosamine kinase activity, exhibits allosteric regulation by cytidine monophosphate-N-acetylneuraminic acid (CMP-Neu5Ac), the end product of neuraminic acid biosynthesis. Moreover, the activity is contingent upon the oligomeric state of the enzyme. The monomeric form is inactive, while the dimeric form selectively catalyzes the phosphorylation of N-acetylmannosamine. The hexameric form, on the other hand, demonstrates full proficiency in both enzyme activities. Furthermore, the UDP-N-acetylglucosamine 2-epimerase activity is increased by PKC-mediated phosphorylation. In terms of biological role, bifunctional enzyme that possesses both UDP-N-acetylglucosamine 2-epimerase and N-acetylmannosamine kinase activities, and serves as the initiator of the biosynthetic pathway leading to the production of N-acetylneuraminic acid (NeuAc), a critical precursor in the synthesis of sialic acids. By catalyzing this pivotal and rate-limiting step in sialic acid biosynthesis, this enzyme assumes a pivotal role in governing the regulation of cell surface sialylation, playing a role in embryonic angiogenesis. Sialic acids represent a category of negatively charged sugars that reside on the surface of cells as terminal components of glycoconjugates and mediate important functions in various cellular processes, including cell adhesion, signal transduction, and cellular recognition. The protein is Bifunctional UDP-N-acetylglucosamine 2-epimerase/N-acetylmannosamine kinase (GNE) of Cricetulus griseus (Chinese hamster).